A 467-amino-acid polypeptide reads, in one-letter code: MAKKRESPKLIKIKDAIKLINQQVSLIGIVLEQREPKQCRNNDWICTLRIIDDTYPSPGLTVNVFSKTLEQLPQIKNHDDMILFTRIKMQTFDSGERVNAACSRWVSSFALFEGVDFVCYQCSTNFHEEEALYKSAMDDLRKVFAGCSQVIKAMQSISYRTKPCSEVFSFLREIKIGKRFDLVCRILHADEDTSAVFVWDGTDAPPASILAKRSEEDKAFSSLSVHTLLSRDVLLSFPTVGTILRVHLSSHLFYRVKPGDWVKLYHLLCEVDRGSWVIKVTSSTKVHHLAQDDRLVEKIMRIYDKRLSSKLGHISFWCFPSPPGLTETDDNCAPFVTLMDIITFPKVTCKYRCIVRVVAAYPWQVEDFCSDENRRHHQVLLTLEDSTATLEAFLCNKDAEYFWGLGFQDTETLRKKRNWLLGIRESSNFVAPRNPPWIECCILSYYTNKADPWNTRLYRIFGTRLLH.

Belongs to the telombin family. Component of the telomerase holoenzyme complex at least composed of TERT, CBF5 and POT1a. The RNA molecule associated to the telomerase complex, and providing a template for telomeric DNA synthesis, is most likely TR and not TER1 as described previously. Interacts with the N-terminal part of TERT. Interacts with CBF5. Interacts with CTC1 and STN1. Does not interact with TEN1. Expressed in roots, rosette leaves, cauline leaves, stems and flowers.

The protein resides in the nucleus. It localises to the chromosome. It is found in the telomere. The protein localises to the nucleolus. Its subcellular location is the cytoplasm. Functionally, component of the telomerase ribonucleoprotein (RNP) complex that is essential for the positive regulation of telomere length. Binds RNA non-specifically. Binds specifically single-stranded telomeric DNA. Not required to recruit telomerase to telomeres, but stimulates TER1 RNP repeat addition processivity. This chain is Protection of telomeres protein 1a, found in Arabidopsis thaliana (Mouse-ear cress).